Consider the following 427-residue polypeptide: Aspartate aminotransferase, mitochondrial (427 aa).

Residues 1–26 (MALLKSRLLVGVARCQPCLAAVQGRA) constitute a mitochondrion transit peptide. The substrate site is built by G62, W159, and N212. K276 carries the N6-(pyridoxal phosphate)lysine modification. R404 is a substrate binding site.

It belongs to the class-I pyridoxal-phosphate-dependent aminotransferase family. As to quaternary structure, homodimer. It depends on pyridoxal 5'-phosphate as a cofactor.

Its subcellular location is the mitochondrion matrix. It catalyses the reaction L-aspartate + 2-oxoglutarate = oxaloacetate + L-glutamate. The enzyme catalyses L-kynurenine + 2-oxoglutarate = kynurenate + L-glutamate + H2O. Catalyzes the irreversible transamination of the L-tryptophan metabolite L-kynurenine to form kynurenic acid (KA). As a member of the malate-aspartate shuttle, it has a key role in the intracellular NAD(H) redox balance. Is important for metabolite exchange between mitochondria and cytosol, and for amino acid metabolism. The protein is Aspartate aminotransferase, mitochondrial (got2) of Xenopus tropicalis (Western clawed frog).